A 500-amino-acid polypeptide reads, in one-letter code: Sulfate adenylyltransferase (500 aa).

The interval 1 to 165 (MLSPHGGILQ…LEAIQLPAHY (165 aa)) is N-terminal. The tract at residues 166–390 (DYLNLRKSPA…LRQYNPPRYR (225 aa)) is catalytic. Sulfate is bound at residue Gln-193. ATP contacts are provided by residues 193-196 (QTRN) and 287-290 (GRDH). Catalysis depends on residues Thr-194, Arg-195, and Asn-196. Arg-195 is a binding site for sulfate. Ala-291 contributes to the sulfate binding site. Residue Ile-329 participates in ATP binding. A required for oligomerization; adenylyl-sulfate kinase-like region spans residues 391–500 (QGFVIVVNHE…FLEDNKFFQF (110 aa)).

It belongs to the sulfate adenylyltransferase family. In terms of assembly, homohexamer. Dimer of trimers.

Its subcellular location is the cytoplasm. The enzyme catalyses sulfate + ATP + H(+) = adenosine 5'-phosphosulfate + diphosphate. Its pathway is sulfur metabolism; hydrogen sulfide biosynthesis; sulfite from sulfate: step 1/3. Its function is as follows. Catalyzes the first intracellular reaction of sulfate assimilation, forming adenosine-5'-phosphosulfate (APS) from inorganic sulfate and ATP. Plays an important role in sulfate activation as a component of the biosynthesis pathway of sulfur-containing amino acids. In Eremothecium gossypii (strain ATCC 10895 / CBS 109.51 / FGSC 9923 / NRRL Y-1056) (Yeast), this protein is Sulfate adenylyltransferase.